A 950-amino-acid polypeptide reads, in one-letter code: Oxysterol-binding protein-related protein 1 (950 aa).

Residues 1–237 form an interaction with RAB7A region; it reads MNTEAEQQLL…NKVVHKALKR (237 aa). 3 ANK repeats span residues 47 to 76, 80 to 109, and 175 to 204; these read LGWTPLHLACYFGHKQVVQDLLKAGAKVNM, MGDTPLHRAAFTGRKELVMLLLEYNADTTV, and LGNTPLHCAAYRAHKQCVLKLLRSGADPSL. One can recognise a PH domain in the interval 235-334; it reads LKRFEGPLWK…WLEAIEEHSA (100 aa). Residues 430–463 are a coiled coil; that stretch reads NFKLEQEQEKNKILSEALETLATEHHELERSLVE. The FFAT motif lies at 469-483; that stretch reads SILSEDEFYDALSGS. Disordered regions lie at residues 795–821 and 881–913; these read KKNTEEKKTSKQASTSEESDEMPVPDS and MENGEIDQASEEKKRLEEKQRAARKNRSKSEED. The stretch at 877–913 forms a coiled coil; that stretch reads DIRAMENGEIDQASEEKKRLEEKQRAARKNRSKSEED. The segment covering 890–901 has biased composition (basic and acidic residues); that stretch reads SEEKKRLEEKQR.

It belongs to the OSBP family. As to quaternary structure, interacts (via FFAT motif) with VAPA. Interacts (via FFAT motif) with VAPB. Interacts with the GTP-bound form of RAB7A. Interacts with OAS1B. Interacts (via FFAT motif) with MOSPD2 (via MSP domain). As to expression, detected in prostate and liver.

Its subcellular location is the late endosome. Functionally, binds phospholipids; exhibits strong binding to phosphatidic acid and weak binding to phosphatidylinositol 3-phosphate. Stabilizes GTP-bound RAB7A on late endosomes/lysosomes and alters functional properties of late endocytic compartments via its interaction with RAB7A. Binds 25-hydroxycholesterol and cholesterol. This chain is Oxysterol-binding protein-related protein 1, found in Rattus norvegicus (Rat).